Reading from the N-terminus, the 105-residue chain is Large ribosomal subunit protein uL24 (105 aa).

Belongs to the universal ribosomal protein uL24 family. As to quaternary structure, part of the 50S ribosomal subunit.

One of two assembly initiator proteins, it binds directly to the 5'-end of the 23S rRNA, where it nucleates assembly of the 50S subunit. Its function is as follows. One of the proteins that surrounds the polypeptide exit tunnel on the outside of the subunit. In Mycobacterium tuberculosis (strain CDC 1551 / Oshkosh), this protein is Large ribosomal subunit protein uL24.